The primary structure comprises 173 residues: Placenta-specific protein 1 (173 aa).

A signal peptide spans 1–23; it reads MKLIKFLGGVVFFTLMFSGYSEQ.

Belongs to the PLAC1 family.

The protein localises to the secreted. Its function is as follows. May play a role in placental development. This chain is Placenta-specific protein 1, found in Rattus norvegicus (Rat).